Consider the following 478-residue polypeptide: Mannose-1-phosphate guanylyltransferase (478 aa).

The protein belongs to the mannose-6-phosphate isomerase type 2 family.

The catalysed reaction is alpha-D-mannose 1-phosphate + GTP + H(+) = GDP-alpha-D-mannose + diphosphate. It participates in nucleotide-sugar biosynthesis; GDP-alpha-D-mannose biosynthesis; GDP-alpha-D-mannose from alpha-D-mannose 1-phosphate (GTP route): step 1/1. Involved in the biosynthesis of the capsular polysaccharide colanic acid. The protein is Mannose-1-phosphate guanylyltransferase (manC) of Escherichia coli (strain K12).